The primary structure comprises 405 residues: Cytoplasmic polyadenylated homeobox-like protein (405 aa).

Disordered stretches follow at residues 1–33 (MNLDGTSGGFPAEEDHHNEERQTKNKRKTKHRH) and 340–363 (PWDLGKQWSSAQSQLQSQLPQNNG). Positions 13-23 (EEDHHNEERQT) are enriched in basic and acidic residues. The segment covering 24 to 33 (KNKRKTKHRH) has biased composition (basic residues). A DNA-binding region (homeobox) is located at residues 28–87 (KTKHRHKFSEELLQELKEIFGENCYPDYTTRKTLAIKFDCPVNVIDNWFQNKRARLPPAE). Over residues 346–360 (QWSSAQSQLQSQLPQ) the composition is skewed to low complexity.

Its subcellular location is the nucleus. Transcription factor that acts as activator. In Homo sapiens (Human), this protein is Cytoplasmic polyadenylated homeobox-like protein.